We begin with the raw amino-acid sequence, 502 residues long: Lysine--tRNA ligase (502 aa).

2 residues coordinate Mg(2+): Glu411 and Glu418.

This sequence belongs to the class-II aminoacyl-tRNA synthetase family. In terms of assembly, homodimer. Mg(2+) serves as cofactor.

The protein resides in the cytoplasm. It catalyses the reaction tRNA(Lys) + L-lysine + ATP = L-lysyl-tRNA(Lys) + AMP + diphosphate. The sequence is that of Lysine--tRNA ligase from Clostridium tetani (strain Massachusetts / E88).